The following is a 971-amino-acid chain: Exportin-2 (971 aa).

An Importin N-terminal domain is found at 29 to 102 (AEKYLESVEG…KSSIINLMLR (74 aa)).

It belongs to the XPO2/CSE1 family.

Its subcellular location is the cytoplasm. It localises to the nucleus. Export receptor for importin alpha. Mediates importin-alpha re-export from the nucleus to the cytoplasm after import substrates have been released into the nucleoplasm. This is Exportin-2 (cse1l) from Xenopus laevis (African clawed frog).